Here is a 212-residue protein sequence, read N- to C-terminus: MKFFIDTANINEIREANDLGILAGVTTNPSLVAKEGVDFHERLREITSLVKGSVSAEVVALDAEGMIKEGKELAAIAPNITVKVPMTTEGLKAVHAFHQEGITTNVTLVFSAVQALLAARAGATYVSPFLGRLDDIGHDGLDLISQIAEIFHVHDLDIQIIAASIRHPQHVTEAALRGAHIATIPFKVISQLSKHPLTDKGIEQFLKDWNNR.

Lysine 83 acts as the Schiff-base intermediate with substrate in catalysis.

The protein belongs to the transaldolase family. Type 3B subfamily.

The protein localises to the cytoplasm. The catalysed reaction is D-sedoheptulose 7-phosphate + D-glyceraldehyde 3-phosphate = D-erythrose 4-phosphate + beta-D-fructose 6-phosphate. The protein operates within carbohydrate degradation; pentose phosphate pathway; D-glyceraldehyde 3-phosphate and beta-D-fructose 6-phosphate from D-ribose 5-phosphate and D-xylulose 5-phosphate (non-oxidative stage): step 2/3. In terms of biological role, transaldolase is important for the balance of metabolites in the pentose-phosphate pathway. This chain is Probable transaldolase (tal), found in Halalkalibacterium halodurans (strain ATCC BAA-125 / DSM 18197 / FERM 7344 / JCM 9153 / C-125) (Bacillus halodurans).